The primary structure comprises 549 residues: Endoplasmic reticulum mannosyl-oligosaccharide 1,2-alpha-mannosidase (549 aa).

Topologically, residues 1-4 (MKNS) are cytoplasmic. A helical; Signal-anchor for type II membrane protein transmembrane segment spans residues 5 to 24 (VGISIATIVAIIAAIYYVPW). Over 25 to 354 (YEHFERKSPG…LLASGSTEGL (330 aa)) the chain is Lumenal. N-linked (GlcNAc...) asparagine glycosylation is found at N96, N155, and N224. C340 and C385 are disulfide-bonded. Catalysis depends on E399, which acts as the Proton donor. Cysteines 468 and 471 form a disulfide. Residue T525 participates in Ca(2+) binding.

It belongs to the glycosyl hydrolase 47 family. As to quaternary structure, homodimer. The cofactor is Ca(2+).

It is found in the endoplasmic reticulum membrane. It carries out the reaction N(4)-(alpha-D-Man-(1-&gt;2)-alpha-D-Man-(1-&gt;2)-alpha-D-Man-(1-&gt;3)-[alpha-D-Man-(1-&gt;2)-alpha-D-Man-(1-&gt;3)-[alpha-D-Man-(1-&gt;2)-alpha-D-Man-(1-&gt;6)]-alpha-D-Man-(1-&gt;6)]-beta-D-Man-(1-&gt;4)-beta-D-GlcNAc-(1-&gt;4)-beta-D-GlcNAc)-L-asparaginyl-[protein] (N-glucan mannose isomer 9A1,2,3B1,2,3) + 4 H2O = N(4)-(alpha-D-Man-(1-&gt;3)-[alpha-D-Man-(1-&gt;3)-[alpha-D-Man-(1-&gt;6)]-alpha-D-Man-(1-&gt;6)]-beta-D-Man-(1-&gt;4)-beta-D-GlcNAc-(1-&gt;4)-beta-D-GlcNAc)-L-asparaginyl-[protein] (N-glucan mannose isomer 5A1,2) + 4 beta-D-mannose. It catalyses the reaction N(4)-(alpha-D-Man-(1-&gt;2)-alpha-D-Man-(1-&gt;2)-alpha-D-Man-(1-&gt;3)-[alpha-D-Man-(1-&gt;3)-[alpha-D-Man-(1-&gt;2)-alpha-D-Man-(1-&gt;6)]-alpha-D-Man-(1-&gt;6)]-beta-D-Man-(1-&gt;4)-beta-D-GlcNAc-(1-&gt;4)-beta-D-GlcNAc)-L-asparaginyl-[protein] (N-glucan mannose isomer 8A1,2,3B1,3) + 3 H2O = N(4)-(alpha-D-Man-(1-&gt;3)-[alpha-D-Man-(1-&gt;3)-[alpha-D-Man-(1-&gt;6)]-alpha-D-Man-(1-&gt;6)]-beta-D-Man-(1-&gt;4)-beta-D-GlcNAc-(1-&gt;4)-beta-D-GlcNAc)-L-asparaginyl-[protein] (N-glucan mannose isomer 5A1,2) + 3 beta-D-mannose. Its pathway is protein modification; protein glycosylation. Functionally, involved in glycoprotein quality control as it is important for the targeting of misfolded glycoproteins for degradation. It primarily trims a single alpha-1,2-linked mannose residue from Man(9)GlcNAc(2) to produce Man(8)GlcNAc(2), but at high enzyme concentrations it further trims the carbohydrates to Man(5)GlcNAc(2). The sequence is that of Endoplasmic reticulum mannosyl-oligosaccharide 1,2-alpha-mannosidase (MNS1) from Saccharomyces cerevisiae (strain ATCC 204508 / S288c) (Baker's yeast).